A 658-amino-acid polypeptide reads, in one-letter code: MKLYCLSGHPTLPCNVLKFKSTTIMLDCGLDMTSTLNFLPLPLVQSPRLSNLPGWSLKDGNAFLDKELKECSGHVFVDSVPEFCLPETELIDLSTVDVILISNYHCMMALPYITEHTGFTGTVYATEPTVQIGRLLMEELVNFIERVPKAQSASLWKNKDIQRLLPSPLKDAVEVSTWRRCYTMQEVNSALSKIQLVGYSQKIELFGAVQVTPLSSGYALGSSNWIIQSHYEKVSYVSGSSLLTTHPQPMDQASLKNSDVLILTGLTQIPTANPDSMVGEFCSNLALTVRNGGNVLVPCYPSGVIYDLLECLYQYIDSAGLSSIPFYFISPVANSSLEFSQIFAEWLCHNKQTKVYLPEPPFPHAELIQTNKLKHYPSIHGDFSNDFRQPCVVFTGHPSLRFGDVVHFMELWGKSSLNTVIFTEPDFSYLEALAPYQPLAMKCIYCPIDTRLNFIQVSKLLKEVQPLHVVCPEQYTQPTPAQSHRMDLMVDCQPPAMSYRRAEVLALPFKRRYEKIEIMPELADSLVPMEIKPGISLATVSAVLHTKDNKHVLQPPPRPTQPTGGKKRKRASDDIPDCKVLKPLLSGSIPVDQFVQTLEKHGFSDIKVEDTAKGHIVLLQEAETLIQIEEDSTHIICDDDEVLRVRLRDLVLKFLQKF.

Lysine 58 is covalently cross-linked (Glycyl lysine isopeptide (Lys-Gly) (interchain with G-Cter in SUMO2)). The disordered stretch occupies residues 548-573 (DNKHVLQPPPRPTQPTGGKKRKRASD). A Nuclear localization signal motif is present at residues 566–570 (KKRKR).

This sequence belongs to the metallo-beta-lactamase superfamily. RNA-metabolizing metallo-beta-lactamase-like family. INTS9 subfamily. As to quaternary structure, component of the Integrator complex, composed of core subunits INTS1, INTS2, INTS3, INTS4, INTS5, INTS6, INTS7, INTS8, INTS9/RC74, INTS10, INTS11/CPSF3L, INTS12, INTS13, INTS14 and INTS15. The core complex associates with protein phosphatase 2A subunits PPP2CA and PPP2R1A, to form the Integrator-PP2A (INTAC) complex. INTS9 is part of the RNA endonuclease subcomplex, composed of INTS4, INTS9, INTS11 and inositol hexakisphosphate (InsP6). Interacts with WDR73; interaction is required for the assembly of the RNA endonuclease subcomplex in the cytoplasm. Interacts with BRAT1; interaction is required for the assembly of the RNA endonuclease subcomplex. Interacts with ESRRB, ESRRB is not a core component of the Integrator complex and this association is a bridge for the interaction with the multiprotein complex Integrator; attracts the transcriptional machinery.

Its subcellular location is the nucleus. It localises to the cytoplasm. Functionally, component of the integrator complex, a multiprotein complex that terminates RNA polymerase II (Pol II) transcription in the promoter-proximal region of genes. The integrator complex provides a quality checkpoint during transcription elongation by driving premature transcription termination of transcripts that are unfavorably configured for transcriptional elongation: the complex terminates transcription by (1) catalyzing dephosphorylation of the C-terminal domain (CTD) of Pol II subunit POLR2A/RPB1 and SUPT5H/SPT5, (2) degrading the exiting nascent RNA transcript via endonuclease activity and (3) promoting the release of Pol II from bound DNA. The integrator complex is also involved in terminating the synthesis of non-coding Pol II transcripts, such as enhancer RNAs (eRNAs), small nuclear RNAs (snRNAs), telomerase RNAs and long non-coding RNAs (lncRNAs). Mediates recruitment of cytoplasmic dynein to the nuclear envelope, probably as component of the integrator complex. In Bos taurus (Bovine), this protein is Integrator complex subunit 9 (INTS9).